Consider the following 126-residue polypeptide: Small ribosomal subunit protein bS6 (126 aa).

The interval 99 to 126 (PLPAPRVVPGTEAPEPAQAAETPEPEAS) is disordered. Positions 107-120 (PGTEAPEPAQAAET) are enriched in low complexity.

It belongs to the bacterial ribosomal protein bS6 family.

In terms of biological role, binds together with bS18 to 16S ribosomal RNA. The chain is Small ribosomal subunit protein bS6 from Synechococcus sp. (strain CC9902).